Reading from the N-terminus, the 656-residue chain is MSSRALRKLQRQRQTELLEEALDSESDEDDEFSSTSGKKVVNVFEILEKENNAINSEAEKSVSEEEQDEPLVEGESPIVSTNKKAKNKKKKKKQQKKKKVTGKRDLDNQSSDNEKLEGLESSKNIDDDIDEIEKAAAELKLKYREQDQVEHVAGVEESATIPLDKELDEKLNKLLGVNISMLNPDLEIRKIFGRIVEKRSVNARHDNLRRKRHVLVQPQEGWPPLVRSGLGMKLTGQSQDLECFFEITQSRAYQEVQETFEYYVQTYDPNNLLMLLRSHPFHIDTLLQVSEIIDQQGDHELSAELVARGLYAFDSILHPRFNLATGATRLPFAIPSNRRLFLCIWRYLQSLQSRGCWRTVFEFCKALLQFDMSDPYAIGTCIDIYALRRREFAWIIDFANYLENSNKISDTPNMLYSSALAMFYVHGDTTDTRASMLAAFERAPYMLSELLDTLNISFTKSSIPSPQDPVQELHSAMYALYAKDSWSDPTVLAFINSILEKETVTLHDVEGQFAELTENLSRRVILLNEQSLRKFLPQRILQGTILSFDPLPPDTYLSESQVFGRDISRRIASFLSDYLSRAREVNENEEEPPAHEFDLPPAEQLLQQIESEVGEESEDGTPVMTRLRSFFGSLFTSTNSETEPAEESTEEMGQGD.

Positions 1–11 are enriched in basic residues; sequence MSSRALRKLQR. Disordered regions lie at residues 1–35, 51–122, and 634–656; these read MSSR…FSST, NNAI…LESS, and LFTS…GQGD. The span at 17-32 shows a compositional bias: acidic residues; the sequence is LLEEALDSESDEDDEF. A compositionally biased stretch (basic and acidic residues) spans 51-63; it reads NNAINSEAEKSVS. Phosphoserine is present on residues Ser56, Ser61, and Ser63. Over residues 83–101 the composition is skewed to basic residues; the sequence is KKAKNKKKKKKQQKKKKVT. Basic and acidic residues predominate over residues 102–122; sequence GKRDLDNQSSDNEKLEGLESS. Residues Ser110 and Ser111 each carry the phosphoserine modification.

The protein belongs to the TCF25 family. In terms of assembly, component of the ribosome quality control complex (RQC), composed of the E3 ubiquitin ligase rkr1/ltn1, rqc1 and mtr1/rqc2, as well as cdc48 and its ubiquitin-binding cofactors. RQC forms a stable complex with 60S ribosomal subunits.

The protein resides in the cytoplasm. Functionally, component of the ribosome quality control complex (RQC), a ribosome-associated complex that mediates ubiquitination and extraction of incompletely synthesized nascent chains for proteasomal degradation. Within the RQC complex, rqc1 is essential for the recruitment of cdc48 to incompletely synthesized nascent polypeptides that are ubiquitinated by rkr1/ltn1. In Schizosaccharomyces pombe (strain 972 / ATCC 24843) (Fission yeast), this protein is Ribosome quality control complex subunit 1.